The chain runs to 135 residues: Small ribosomal subunit protein uS8 (135 aa).

It belongs to the universal ribosomal protein uS8 family. As to quaternary structure, part of the 30S ribosomal subunit. Contacts proteins S5 and S12.

Functionally, one of the primary rRNA binding proteins, it binds directly to 16S rRNA central domain where it helps coordinate assembly of the platform of the 30S subunit. This is Small ribosomal subunit protein uS8 from Cutibacterium acnes (strain DSM 16379 / KPA171202) (Propionibacterium acnes).